Reading from the N-terminus, the 152-residue chain is Flagellar assembly factor FliW (152 aa).

The protein belongs to the FliW family. Interacts with translational regulator CsrA and flagellin(s).

Its subcellular location is the cytoplasm. Its function is as follows. Acts as an anti-CsrA protein, binds CsrA and prevents it from repressing translation of its target genes, one of which is flagellin. Binds to flagellin and participates in the assembly of the flagellum. The protein is Flagellar assembly factor FliW of Desulfitobacterium hafniense (strain DSM 10664 / DCB-2).